Reading from the N-terminus, the 339-residue chain is tRNA N6-adenosine threonylcarbamoyltransferase (339 aa).

Histidine 114 and histidine 118 together coordinate Fe cation. Substrate-binding positions include valine 137–glycine 141, aspartate 170, glycine 183, aspartate 187, and asparagine 277. Residue aspartate 305 coordinates Fe cation.

It belongs to the KAE1 / TsaD family. It depends on Fe(2+) as a cofactor.

It localises to the cytoplasm. The enzyme catalyses L-threonylcarbamoyladenylate + adenosine(37) in tRNA = N(6)-L-threonylcarbamoyladenosine(37) in tRNA + AMP + H(+). Its function is as follows. Required for the formation of a threonylcarbamoyl group on adenosine at position 37 (t(6)A37) in tRNAs that read codons beginning with adenine. Is involved in the transfer of the threonylcarbamoyl moiety of threonylcarbamoyl-AMP (TC-AMP) to the N6 group of A37, together with TsaE and TsaB. TsaD likely plays a direct catalytic role in this reaction. The sequence is that of tRNA N6-adenosine threonylcarbamoyltransferase from Clostridium perfringens (strain SM101 / Type A).